Here is a 358-residue protein sequence, read N- to C-terminus: L-Ala-D/L-Glu epimerase (358 aa).

Substrate contacts are provided by R24, T135, and K160. Catalysis depends on K162, which acts as the Proton acceptor; specific for (R)-substrate epimerization. Mg(2+)-binding residues include D190, E218, and D243. The Proton acceptor; specific for (S)-substrate epimerization role is filled by K267. 3 residues coordinate substrate: C295, D320, and D322.

Belongs to the mandelate racemase/muconate lactonizing enzyme family. Mg(2+) is required as a cofactor.

The catalysed reaction is L-alanyl-L-glutamate = L-alanyl-D-glutamate. The protein operates within cell wall degradation; peptidoglycan degradation. Functionally, catalyzes the epimerization of L-Ala-D-Glu to L-Ala-L-Glu and has probably a role in the metabolism of the murein peptide, of which L-Ala-D-Glu is a component. Is also able to catalyze the epimerization of L-Ala-D-Asp. The protein is L-Ala-D/L-Glu epimerase of Clostridium acetobutylicum (strain ATCC 824 / DSM 792 / JCM 1419 / IAM 19013 / LMG 5710 / NBRC 13948 / NRRL B-527 / VKM B-1787 / 2291 / W).